The following is a 249-amino-acid chain: Exosome complex component Rrp41 (249 aa).

The protein belongs to the RNase PH family. Rrp41 subfamily. Component of the archaeal exosome complex. Forms a hexameric ring-like arrangement composed of 3 Rrp41-Rrp42 heterodimers. The hexameric ring associates with a trimer of Rrp4 and/or Csl4 subunits.

It localises to the cytoplasm. Its function is as follows. Catalytic component of the exosome, which is a complex involved in RNA degradation. Has 3'-&gt;5' exoribonuclease activity. Can also synthesize heteromeric RNA-tails. The polypeptide is Exosome complex component Rrp41 (Pyrococcus horikoshii (strain ATCC 700860 / DSM 12428 / JCM 9974 / NBRC 100139 / OT-3)).